Reading from the N-terminus, the 555-residue chain is Urocanate hydratase (555 aa).

NAD(+) is bound by residues 51–52 (GG), Gln129, 175–177 (GMG), Glu195, 262–266 (QTSAH), 272–273 (YL), and Tyr321. Cys409 is a catalytic residue. Residue Gly491 coordinates NAD(+).

It belongs to the urocanase family. It depends on NAD(+) as a cofactor.

The protein resides in the cytoplasm. The enzyme catalyses 4-imidazolone-5-propanoate = trans-urocanate + H2O. Its pathway is amino-acid degradation; L-histidine degradation into L-glutamate; N-formimidoyl-L-glutamate from L-histidine: step 2/3. Functionally, catalyzes the conversion of urocanate to 4-imidazolone-5-propionate. This Xanthomonas euvesicatoria pv. vesicatoria (strain 85-10) (Xanthomonas campestris pv. vesicatoria) protein is Urocanate hydratase.